The primary structure comprises 446 residues: Maltoporin (446 aa).

A signal peptide spans 1–25 (MMITLRKLPLAVAVAAGVMSAQAMA).

Belongs to the porin LamB (TC 1.B.3) family. In terms of assembly, homotrimer formed of three 18-stranded antiparallel beta-barrels, containing three independent channels.

The protein localises to the cell outer membrane. It carries out the reaction beta-maltose(in) = beta-maltose(out). Functionally, involved in the transport of maltose and maltodextrins. This Escherichia coli (strain SE11) protein is Maltoporin.